A 293-amino-acid chain; its full sequence is Protein boule-like (293 aa).

Over residues 1–16 (METESRAQSTNQTQTD) the composition is skewed to polar residues. The interval 1–39 (METESRAQSTNQTQTDSLSPSPNPVSPVPLNNPTSGPRY) is disordered. A phosphoserine mark is found at S19, S21, and S26. The region spanning 45-122 (NRIFVGGIDF…KKLNIGPAIR (78 aa)) is the RRM domain. A DAZ domain is found at 172–196 (PSRSISSSPVMVAQPVYQQPAYHYQ).

This sequence belongs to the RRM DAZ family. As to quaternary structure, interacts with DAZ1 and DAZL. In terms of tissue distribution, testis specific. Not expressed in early embryos, primoridal germ cells and spermatogonial cells. First expressed in the cytoplasm of spermatocytes and then persists through meiosis.

It is found in the cytoplasm. Its function is as follows. Probable RNA-binding protein, which may be required during spermatogenesis. May act by binding to the 3'-UTR of mRNAs and regulating their translation. In Mus musculus (Mouse), this protein is Protein boule-like.